The sequence spans 393 residues: Acetylornithine aminotransferase 1 (393 aa).

Arg131 lines the N(2)-acetyl-L-ornithine pocket. Position 215 to 218 (Asp215 to Gln218) interacts with pyridoxal 5'-phosphate. An N6-(pyridoxal phosphate)lysine modification is found at Lys244. Thr272 is a binding site for N(2)-acetyl-L-ornithine. Residue Thr273 participates in pyridoxal 5'-phosphate binding.

This sequence belongs to the class-III pyridoxal-phosphate-dependent aminotransferase family. ArgD subfamily. As to quaternary structure, homodimer. Requires pyridoxal 5'-phosphate as cofactor.

The protein localises to the cytoplasm. The catalysed reaction is N(2)-acetyl-L-ornithine + 2-oxoglutarate = N-acetyl-L-glutamate 5-semialdehyde + L-glutamate. Its pathway is amino-acid biosynthesis; L-arginine biosynthesis; N(2)-acetyl-L-ornithine from L-glutamate: step 4/4. This Bordetella parapertussis (strain 12822 / ATCC BAA-587 / NCTC 13253) protein is Acetylornithine aminotransferase 1.